The sequence spans 196 residues: Large ribosomal subunit protein uL18 (196 aa).

It belongs to the universal ribosomal protein uL18 family. Part of the 50S ribosomal subunit. Contacts the 5S and 23S rRNAs.

This is one of the proteins that bind and probably mediate the attachment of the 5S RNA into the large ribosomal subunit, where it forms part of the central protuberance. This is Large ribosomal subunit protein uL18 from Saccharolobus islandicus (strain Y.N.15.51 / Yellowstone #2) (Sulfolobus islandicus).